Reading from the N-terminus, the 362-residue chain is mRNA decay activator protein ZFP36L2 (362 aa).

Positions 100–109 are enriched in basic and acidic residues; it reads SFSENGERSQ. Positions 100–126 are disordered; that stretch reads SFSENGERSQHLLHLQQQQQQKAGAQV. Positions 111 to 120 are enriched in low complexity; that stretch reads LLHLQQQQQQ. The short motif at 130 to 135 is the RNA-binding element; that stretch reads RYKTEL. 2 consecutive C3H1-type zinc fingers follow at residues 130–158 and 168–196; these read RYKT…HGFH and KYKT…HNAE. The tract at residues 147–188 is RNA-binding; sequence YGEKCQFAHGFHELRSLTRHPKYKTELCRTFHTIGFCPYGPR. Disordered stretches follow at residues 225 to 244 and 306 to 362; these read DSPL…SSSS and SESP…ISDD. Residues 327–346 are compositionally biased toward low complexity; it reads YLSGSLSSGSLSGSDSPTLD.

Phosphorylated.

It localises to the nucleus. It is found in the cytoplasm. In terms of biological role, zinc-finger RNA-binding protein that destabilizes several cytoplasmic AU-rich element (ARE)-containing mRNA transcripts by promoting their poly(A) tail removal or deadenylation, and hence provide a mechanism for attenuating protein synthesis. Acts as a 3'-untranslated region (UTR) ARE mRNA-binding adapter protein to communicate signaling events to the mRNA decay machinery. Functions by recruiting the CCR4-NOT deadenylase complex and probably other components of the cytoplasmic RNA decay machinery to the bound ARE-containing mRNAs, and hence promotes ARE-mediated mRNA deadenylation and decay processes. Binds to 3'-UTR ARE of numerous mRNAs. Also induces the degradation of ARE-containing mRNAs even in absence of poly(A) tail. Required for tubulogenesis during pronephros development. The chain is mRNA decay activator protein ZFP36L2 (zfp36l2) from Xenopus tropicalis (Western clawed frog).